Consider the following 431-residue polypeptide: Trigger factor (431 aa).

Residues 160 to 245 form the PPIase FKBP-type domain; it reads DDRVTIDFVG…VKKVEVMVLP (86 aa).

It belongs to the FKBP-type PPIase family. Tig subfamily.

It is found in the cytoplasm. It catalyses the reaction [protein]-peptidylproline (omega=180) = [protein]-peptidylproline (omega=0). Functionally, involved in protein export. Acts as a chaperone by maintaining the newly synthesized protein in an open conformation. Functions as a peptidyl-prolyl cis-trans isomerase. This is Trigger factor from Mannheimia succiniciproducens (strain KCTC 0769BP / MBEL55E).